The chain runs to 604 residues: uncharacterized protein (604 aa).

The disordered stretch occupies residues 239–259 (ELNSPQELNDPQELNNSQDLN).

This is an uncharacterized protein from Escherichia coli (strain K12).